The following is a 1169-amino-acid chain: Integrin alpha-X (1169 aa).

Positions 1–19 (MSCTWIAFLLLLGFVSCLG) are cleaved as a signal peptide. Residues 20–1116 (FNLDAEKLTH…EMYKVHNPVP (1097 aa)) are Extracellular-facing. 2 FG-GAP repeats span residues 23–78 (DAEK…NCEP) and 79–138 (ISLQ…QSQN). Cysteines 69 and 76 form a disulfide. A glycan (N-linked (GlcNAc...) asparagine) is linked at Asn-89. 2 cysteine pairs are disulfide-bonded: Cys-108–Cys-126 and Cys-116–Cys-146. Residues 152 to 330 (DIVFLIDGSG…DALKDIENQL (179 aa)) enclose the VWFA domain. 4 residues coordinate Mg(2+): Asp-158, Ser-160, Ser-162, and Asp-260. Asn-267 carries N-linked (GlcNAc...) asparagine glycosylation. FG-GAP repeat units follow at residues 341–392 (ETPS…PTFI), 393–444 (NMSQ…SRHW), 445–505 (RPKS…GSRW), 508–566 (GTTL…QDIA), and 571–631 (QRIS…FTPA). Asn-393 is a glycosylation site (N-linked (GlcNAc...) asparagine). Asp-467, Asp-469, Asp-471, and Asp-475 together coordinate Ca(2+). Cysteines 496 and 507 form a disulfide. Residues Asp-531, Asn-533, Asp-535, Asp-539, Asp-594, Asp-598, and Asp-602 each coordinate Ca(2+). Disulfide bonds link Cys-640-Cys-721 and Cys-656-Cys-711. Asn-734 carries N-linked (GlcNAc...) asparagine glycosylation. Disulfide bonds link Cys-770–Cys-776 and Cys-858–Cys-873. Asn-949 carries an N-linked (GlcNAc...) asparagine glycan. 2 cysteine pairs are disulfide-bonded: Cys-1007–Cys-1031 and Cys-1036–Cys-1041. N-linked (GlcNAc...) asparagine glycans are attached at residues Asn-1059 and Asn-1084. A helical transmembrane segment spans residues 1117–1137 (LIVGSSVGGLLLLAIITAILY). Topologically, residues 1138-1169 (KAGFFKRQYKEMLEEANGQFVSDGTPTPQVAQ) are cytoplasmic. The short motif at 1140 to 1144 (GFFKR) is the GFFKR motif element.

It belongs to the integrin alpha chain family. In terms of assembly, heterodimer of an alpha and a beta subunit. Alpha-X associates with beta-2.

It localises to the membrane. In terms of biological role, integrin alpha-X/beta-2 is a receptor for fibrinogen. It recognizes the sequence G-P-R in fibrinogen. It mediates cell-cell interaction during inflammatory responses. It is especially important in monocyte adhesion and chemotaxis. This is Integrin alpha-X (Itgax) from Mus musculus (Mouse).